The sequence spans 423 residues: D-tagatose-1,6-bisphosphate aldolase subunit GatZ (423 aa).

This sequence belongs to the GatZ/KbaZ family. GatZ subfamily. As to quaternary structure, forms a complex with GatY.

It participates in carbohydrate metabolism; D-tagatose 6-phosphate degradation; D-glyceraldehyde 3-phosphate and glycerone phosphate from D-tagatose 6-phosphate: step 2/2. In terms of biological role, component of the tagatose-1,6-bisphosphate aldolase GatYZ that is required for full activity and stability of the Y subunit. Could have a chaperone-like function for the proper and stable folding of GatY. When expressed alone, GatZ does not show any aldolase activity. Is involved in the catabolism of galactitol. In Salmonella newport (strain SL254), this protein is D-tagatose-1,6-bisphosphate aldolase subunit GatZ.